The primary structure comprises 707 residues: Protein kinase C theta type (707 aa).

The C2 domain occupies 1 to 107 (MSPFLRIGLS…KNNGRTEIWL (107 aa)). Phosphotyrosine; by LCK is present on Y90. A Phorbol-ester/DAG-type 1 zinc finger spans residues 159–209 (CHEFTATFFPQPTFCSVCHEFVWGLNKQGYQCRRCNAAIHKKCIDKVIAKC). T219 carries the post-translational modification Phosphothreonine; by autocatalysis. The segment at 231–281 (PHRFKVYNYKSPTFCEHCGTLLWGLARQGLKCDACGMNVHHRCQTKVANLC) adopts a Phorbol-ester/DAG-type 2 zinc-finger fold. The residue at position 348 (S348) is a Phosphoserine. Residues 380-634 (FILHKMLGKG…RGDIRQHPLF (255 aa)) form the Protein kinase domain. Residues 386-394 (LGKGSFGKV) and K409 each bind ATP. D504 (proton acceptor) is an active-site residue. At T538 the chain carries Phosphothreonine; by PDPK1. The region spanning 635–706 (REINWEELER…INPGMETLIC (72 aa)) is the AGC-kinase C-terminal domain. S676 and S685 each carry phosphoserine. A Phosphoserine; by autocatalysis modification is found at S695.

The protein belongs to the protein kinase superfamily. AGC Ser/Thr protein kinase family. PKC subfamily. In terms of assembly, part of a membrane raft complex composed at least of BCL10, CARD11, MALT1 and IKBKB. Interacts with GLRX3 (via N-terminus). Interacts with ECT2. Interacts with CCDC88A/GIV; the interaction leads to phosphorylation of CCDC88A and inhibition of its guanine nucleotide exchange factor activity. Interacts with CD28. The cofactor is Mg(2+). In terms of processing, autophosphorylation at Thr-219 is required for targeting to the TCR and cellular function of PRKCQ upon antigen receptor ligation. Following TCR stimulation, phosphorylated at Tyr-90 and Ser-685.

Its subcellular location is the cytoplasm. The protein resides in the cell membrane. It catalyses the reaction L-seryl-[protein] + ATP = O-phospho-L-seryl-[protein] + ADP + H(+). The catalysed reaction is L-threonyl-[protein] + ATP = O-phospho-L-threonyl-[protein] + ADP + H(+). Novel PKCs (PRKCD, PRKCE, PRKCH and PRKCQ) are calcium-insensitive, but activated by diacylglycerol (DAG) and phosphatidylserine. Three specific sites; Thr-538 (activation loop of the kinase domain), Ser-676 (turn motif) and Ser-695 (hydrophobic region), need to be phosphorylated for its full activation. Its function is as follows. Calcium-independent, phospholipid- and diacylglycerol (DAG)-dependent serine/threonine-protein kinase that mediates non-redundant functions in T-cell receptor (TCR) signaling, including T-cells activation, proliferation, differentiation and survival, by mediating activation of multiple transcription factors such as NF-kappa-B, JUN, NFATC1 and NFATC2. In TCR-CD3/CD28-co-stimulated T-cells, is required for the activation of NF-kappa-B and JUN, which in turn are essential for IL2 production, and participates in the calcium-dependent NFATC1 and NFATC2 transactivation. Mediates the activation of the canonical NF-kappa-B pathway (NFKB1) by direct phosphorylation of CARD11 on several serine residues, inducing CARD11 association with lipid rafts and recruitment of the BCL10-MALT1 complex, which then activates IKK complex, resulting in nuclear translocation and activation of NFKB1. May also play an indirect role in activation of the non-canonical NF-kappa-B (NFKB2) pathway. In the signaling pathway leading to JUN activation, acts by phosphorylating the mediator STK39/SPAK and may not act through MAP kinases signaling. Plays a critical role in TCR/CD28-induced NFATC1 and NFATC2 transactivation by participating in the regulation of reduced inositol 1,4,5-trisphosphate generation and intracellular calcium mobilization. After costimulation of T-cells through CD28 can phosphorylate CBLB and is required for the ubiquitination and subsequent degradation of CBLB, which is a prerequisite for the activation of TCR. During T-cells differentiation, plays an important role in the development of T-helper 2 (Th2) cells following immune and inflammatory responses, and, in the development of inflammatory autoimmune diseases, is necessary for the activation of IL17-producing Th17 cells. May play a minor role in Th1 response. Upon TCR stimulation, mediates T-cell protective survival signal by phosphorylating BAD, thus protecting T-cells from BAD-induced apoptosis, and by up-regulating BCL-X(L)/BCL2L1 levels through NF-kappa-B and JUN pathways. In platelets, regulates signal transduction downstream of the ITGA2B, CD36/GP4, F2R/PAR1 and F2RL3/PAR4 receptors, playing a positive role in 'outside-in' signaling and granule secretion signal transduction. May relay signals from the activated ITGA2B receptor by regulating the uncoupling of WASP and WIPF1, thereby permitting the regulation of actin filament nucleation and branching activity of the Arp2/3 complex. May mediate inhibitory effects of free fatty acids on insulin signaling by phosphorylating IRS1, which in turn blocks IRS1 tyrosine phosphorylation and downstream activation of the PI3K/AKT pathway. Phosphorylates MSN (moesin) in the presence of phosphatidylglycerol or phosphatidylinositol. Phosphorylates PDPK1 at 'Ser-504' and 'Ser-532' and negatively regulates its ability to phosphorylate PKB/AKT1. Phosphorylates CCDC88A/GIV and inhibits its guanine nucleotide exchange factor activity. Phosphorylates and activates LRRK1, which phosphorylates RAB proteins involved in intracellular trafficking. This Rattus norvegicus (Rat) protein is Protein kinase C theta type (Prkcq).